Consider the following 3416-residue polypeptide: Genome polyprotein (3416 aa).

A disordered region spans residues 1-34; that stretch reads MAKGAVLKGKGGGPPRRVPKETAKKTRQGPGRLP. Residues 1-99 lie on the Cytoplasmic side of the membrane; the sequence is MAKGAVLKGK…NRRRGKRRST (99 aa). Positions 97 to 117 are cleaved as a propeptide — ER anchor for the capsid protein C, removed in mature form by serine protease NS3; the sequence is RSTTGLLTSILLACLATLVIS. The chain crosses the membrane as a helical span at residues 100-120; the sequence is TGLLTSILLACLATLVISATI. Over 121–243 the chain is Extracellular; that stretch reads RRERTGDMVI…HLTRVEGWVW (123 aa). The N-linked (GlcNAc...) asparagine; by host glycan is linked to Asn145. The chain crosses the membrane as a helical span at residues 244–261; that stretch reads KNKLLTMAFCAVVWMVTD. A topological domain (cytoplasmic) is located at residue Ser262. Residues 263–281 form a helical membrane-spanning segment; sequence LPTRFIVITVALCLAPTYA. Over 282-728 the chain is Extracellular; it reads TRCTHLQNRD…HTAFGAAFNT (447 aa). Intrachain disulfides connect Cys284/Cys311, Cys341/Cys397, Cys341/Cys402, Cys355/Cys386, Cys373/Cys397, and Cys373/Cys402. The tract at residues 379-392 is fusion peptide; that stretch reads DRGWGNHCGLFGKG. Asn435 is a glycosylation site (N-linked (GlcNAc...) asparagine; by host). 2 cysteine pairs are disulfide-bonded: Cys467–Cys571 and Cys588–Cys619. Residues 729-749 traverse the membrane as a helical segment; sequence IFGGVGFLPRILLGVALAWLG. The Cytoplasmic segment spans residues 750–756; the sequence is LNSRNPT. Residues 757 to 777 traverse the membrane as a helical segment; it reads LSVGFLITGGLVLTMTLGVGA. Residues 778-1134 are Extracellular-facing; sequence DMGCAIDANR…RSMVLADNGA (357 aa). Intrachain disulfides connect Cys781/Cys792, Cys832/Cys922, Cys957/Cys1002, Cys1059/Cys1108, Cys1070/Cys1092, and Cys1091/Cys1095. Asn862, Asn985, and Asn1001 each carry an N-linked (GlcNAc...) asparagine; by host glycan. A helical membrane pass occupies residues 1135–1155; that stretch reads MLSEGGVPGIVAVFVVLELVI. Over 1156–1162 the chain is Cytoplasmic; that stretch reads RRRPTTG. The chain crosses the membrane as a helical span at residues 1163-1183; the sequence is TSVVWCGVVVLGLVVTGLVTI. Over 1184 to 1189 the chain is Lumenal; that stretch reads EGLCRY. A helical membrane pass occupies residues 1190–1210; the sequence is VVAVGILMSMELGPEIVALVL. At 1211–1235 the chain is on the cytoplasmic side; sequence LQAVFDMRTGLLVAFAVKRAYTTRE. Residues 1236 to 1256 traverse the membrane as a helical segment; it reads AVVTYFLLLVLELGFPEASLS. Over 1257 to 1295 the chain is Lumenal; the sequence is NIWKWADSLAMGTLILQACSQEGRARVGYLLAAMMTQKD. The helical transmembrane segment at 1296 to 1316 threads the bilayer; sequence MAIIHTGLTIFLSAATAMAVW. The Cytoplasmic segment spans residues 1317–1361; the sequence is SMIKGQRDQKGLSWATPLVGLFGGEGVGLRLLAFRRLAERRNRRS. Residues 1362 to 1379 form a helical membrane-spanning segment; sequence FSEPLTVVGVMLTVASGM. Residues 1380–1384 are Lumenal-facing; that stretch reads VRHTS. Residues 1385 to 1405 traverse the membrane as a helical segment; sequence QEALCALVAGAFLLLMMVLGT. The Cytoplasmic portion of the chain corresponds to 1406–1458; sequence RKMQLIAEWCGEVEWNPDLVNEGGEVNLKVRQDAMGNLHLTEVEKEERAMALW. The interacts with and activates NS3 protease stretch occupies residues 1412–1451; that stretch reads AEWCGEVEWNPDLVNEGGEVNLKVRQDAMGNLHLTEVEKE. The helical intramembrane region spans 1459–1479; that stretch reads LLAGLVASAFHWAGILIVLAI. The Cytoplasmic portion of the chain corresponds to 1480–2162; it reads WTFFEMLSSG…RMAERDAPEA (683 aa). A Peptidase S7 domain is found at 1492-1671; it reads SELVFSGQGT…EAEKSRPELP (180 aa). Active-site charge relay system; for serine protease NS3 activity residues include His1545, Asp1569, and Ser1629. Residues 1677 to 1833 form the Helicase ATP-binding domain; that stretch reads TGWMSKGQIT…ESNGAIMSEE (157 aa). ATP is bound at residue 1690-1697; sequence MHPGSGKT. Residues 1781 to 1784 carry the DEAH box motif; that stretch reads DEAH. The Helicase C-terminal domain maps to 1844–2002; the sequence is GFDWITEYEG…TLRGPVATFY (159 aa). Lys1885 is subject to N6-acetyllysine; by host. Residues 2163–2183 traverse the membrane as a helical segment; it reads FLTIVEVAVLGVATLGILWCF. The Lumenal segment spans residues 2184–2191; that stretch reads VARTSVSR. Positions 2192–2211 form an intramembrane region, helical; that stretch reads MFLGTVVLFAALLLLWIGGV. Asp2212 is a topological domain (lumenal). The helical transmembrane segment at 2213-2233 threads the bilayer; it reads YGYMAGIALIFYIFLTVLQPE. The Cytoplasmic portion of the chain corresponds to 2234 to 2246; the sequence is PGKQRSSDDNRLA. The chain crosses the membrane as a helical span at residues 2247–2267; it reads YFLLGLLSLAGLVTANEMGML. Residues 2268–2301 are Lumenal-facing; that stretch reads DKTKADLAGLMWHGEQRHPAWEEWTNVDIQPARS. Residues 2302-2322 constitute an intramembrane region (helical); sequence WGTYVLIVSLFTPYMLHQLQT. Residues 2323–2345 are Lumenal-facing; that stretch reads KIQQLVNSSVASGAQAMRDLGGG. The helical intramembrane region spans 2346-2366; the sequence is TPFFGVAGHVIALGVTSLVGA. The Lumenal portion of the chain corresponds to 2367-2368; the sequence is TP. A helical membrane pass occupies residues 2369–2389; the sequence is LSLGLGVALAAFHLAIVASGL. Residues 2390 to 2432 lie on the Cytoplasmic side of the membrane; sequence EAELTQRAHRVFFSAMVKNPMVDGDVINPFPDGEPKPVLYERR. A helical membrane pass occupies residues 2433–2453; the sequence is MSLILAIALCMVSVVLNRTAA. The Lumenal segment spans residues 2454-2476; sequence SMTEAGAVGLAALGQLVHPETET. Residues 2477-2497 form a helical membrane-spanning segment; that stretch reads LWTMPMACGMAGLVRGSFWGL. The Cytoplasmic segment spans residues 2498–3416; sequence LPMGHRLWLK…WDLKLESNII (919 aa). Residues 2514–2778 form the mRNA cap 0-1 NS5-type MT domain; it reads GGADGETLGD…EVDLGTGTRC (265 aa). Position 2569 (Ser2569) interacts with S-adenosyl-L-methionine. At Ser2569 the chain carries Phosphoserine. The For 2'-O-MTase activity role is filled by Lys2574. S-adenosyl-L-methionine is bound by residues Gly2599, Trp2600, Thr2617, Ile2618, Asp2644, and Val2645. Residue Asp2659 is the For 2'-O-MTase activity of the active site. Ile2660 provides a ligand contact to S-adenosyl-L-methionine. Catalysis depends on for 2'-O-MTase activity residues Lys2696 and Glu2732. The interaction with host SCRIB stretch occupies residues 2732–2736; sequence EMYFS. Tyr2734 lines the S-adenosyl-L-methionine pocket. 4 residues coordinate Zn(2+): Glu2952, His2956, Cys2961, and Cys2964. The 150-residue stretch at 3042-3191 folds into the RdRp catalytic domain; the sequence is GLFYADDTAG…RPIDDRFGKA (150 aa). 3 residues coordinate Zn(2+): His3226, Cys3242, and Cys3361.

The protein in the N-terminal section; belongs to the class I-like SAM-binding methyltransferase superfamily. mRNA cap 0-1 NS5-type methyltransferase family. In terms of assembly, homodimer. Interacts (via N-terminus) with host EXOC1 (via C-terminus); this interaction results in EXOC1 degradation through the proteasome degradation pathway. Forms heterodimers with envelope protein E in the endoplasmic reticulum and Golgi. As to quaternary structure, homodimer; in the endoplasmic reticulum and Golgi. Interacts with protein prM. Interacts with non-structural protein 1. In terms of assembly, homodimer; Homohexamer when secreted. Interacts with envelope protein E. Interacts (via N-terminus) with serine protease NS3. As to quaternary structure, forms a heterodimer with serine protease NS3. May form homooligomers. In terms of assembly, forms a heterodimer with NS2B. Interacts with NS4B. Interacts with unphosphorylated RNA-directed RNA polymerase NS5; this interaction stimulates RNA-directed RNA polymerase NS5 guanylyltransferase activity. Interacts with serine protease NS3. As to quaternary structure, homodimer. Interacts with host STAT2; this interaction inhibits the phosphorylation of the latter, and, when all viral proteins are present (polyprotein), targets STAT2 for degradation. Interacts with serine protease NS3. Specific enzymatic cleavages in vivo yield mature proteins. Cleavages in the lumen of endoplasmic reticulum are performed by host signal peptidase, whereas cleavages in the cytoplasmic side are performed by serine protease NS3. Signal cleavage at the 2K-4B site requires a prior NS3 protease-mediated cleavage at the 4A-2K site. Post-translationally, cleaved in post-Golgi vesicles by a host furin, releasing the mature small envelope protein M, and peptide pr. This cleavage is incomplete as up to 30% of viral particles still carry uncleaved prM. In terms of processing, N-glycosylated. N-glycosylated. The excreted form is glycosylated and this is required for efficient secretion of the protein from infected cells. Post-translationally, acetylated by host KAT5. Acetylation modulates NS3 RNA-binding and unwinding activities and plays an important positive role for viral replication. In terms of processing, phosphorylated on serines residues. This phosphorylation may trigger NS5 nuclear localization.

Its subcellular location is the virion. It is found in the host nucleus. It localises to the host cytoplasm. The protein resides in the host perinuclear region. The protein localises to the secreted. Its subcellular location is the virion membrane. It is found in the host endoplasmic reticulum membrane. It catalyses the reaction Selective hydrolysis of -Xaa-Xaa-|-Yaa- bonds in which each of the Xaa can be either Arg or Lys and Yaa can be either Ser or Ala.. It carries out the reaction RNA(n) + a ribonucleoside 5'-triphosphate = RNA(n+1) + diphosphate. The enzyme catalyses a ribonucleoside 5'-triphosphate + H2O = a ribonucleoside 5'-diphosphate + phosphate + H(+). The catalysed reaction is ATP + H2O = ADP + phosphate + H(+). It catalyses the reaction a 5'-end (5'-triphosphoguanosine)-ribonucleoside in mRNA + S-adenosyl-L-methionine = a 5'-end (N(7)-methyl 5'-triphosphoguanosine)-ribonucleoside in mRNA + S-adenosyl-L-homocysteine. It carries out the reaction a 5'-end (N(7)-methyl 5'-triphosphoguanosine)-ribonucleoside in mRNA + S-adenosyl-L-methionine = a 5'-end (N(7)-methyl 5'-triphosphoguanosine)-(2'-O-methyl-ribonucleoside) in mRNA + S-adenosyl-L-homocysteine + H(+). Functionally, plays a role in virus budding by binding to the cell membrane and gathering the viral RNA into a nucleocapsid that forms the core of a mature virus particle. During virus entry, may induce genome penetration into the host cytoplasm after hemifusion induced by the surface proteins. Can migrate to the cell nucleus where it modulates host functions. In terms of biological role, inhibits RNA silencing by interfering with host Dicer. Its function is as follows. Prevents premature fusion activity of envelope proteins in trans-Golgi by binding to envelope protein E at pH6.0. After virion release in extracellular space, gets dissociated from E dimers. Acts as a chaperone for envelope protein E during intracellular virion assembly by masking and inactivating envelope protein E fusion peptide. prM is the only viral peptide matured by host furin in the trans-Golgi network probably to avoid catastrophic activation of the viral fusion activity in acidic Golgi compartment prior to virion release. prM-E cleavage is inefficient, and many virions are only partially matured. These uncleaved prM would play a role in immune evasion. Functionally, may play a role in virus budding. Exerts cytotoxic effects by activating a mitochondrial apoptotic pathway through M ectodomain. May display a viroporin activity. In terms of biological role, binds to host cell surface receptor and mediates fusion between viral and cellular membranes. Envelope protein is synthesized in the endoplasmic reticulum in the form of heterodimer with protein prM. They play a role in virion budding in the ER, and the newly formed immature particle is covered with 60 spikes composed of heterodimer between precursor prM and envelope protein E. The virion is transported to the Golgi apparatus where the low pH causes dissociation of PrM-E heterodimers and formation of E homodimers. prM-E cleavage is inefficient, and many virions are only partially matured. These uncleaved prM would play a role in immune evasion. Its function is as follows. Involved in immune evasion, pathogenesis and viral replication. Once cleaved off the polyprotein, is targeted to three destinations: the viral replication cycle, the plasma membrane and the extracellular compartment. Essential for viral replication. Required for formation of the replication complex and recruitment of other non-structural proteins to the ER-derived membrane structures. Excreted as a hexameric lipoparticle that plays a role against host immune response. Antagonizing the complement function. Binds to the host macrophages and dendritic cells. Inhibits signal transduction originating from Toll-like receptor 3 (TLR3). Component of the viral RNA replication complex that functions in virion assembly and antagonizes the host immune response. Functionally, required cofactor for the serine protease function of NS3. May have membrane-destabilizing activity and form viroporins. In terms of biological role, displays three enzymatic activities: serine protease, NTPase and RNA helicase. NS3 serine protease, in association with NS2B, performs its autocleavage and cleaves the polyprotein at dibasic sites in the cytoplasm: C-prM, NS2A-NS2B, NS2B-NS3, NS3-NS4A, NS4A-2K and NS4B-NS5. NS3 RNA helicase binds RNA and unwinds dsRNA in the 3' to 5' direction. Its function is as follows. Regulates the ATPase activity of the NS3 helicase activity. NS4A allows NS3 helicase to conserve energy during unwinding. Functions as a signal peptide for NS4B and is required for the interferon antagonism activity of the latter. Functionally, induces the formation of ER-derived membrane vesicles where the viral replication takes place. Inhibits interferon (IFN)-induced host STAT1 phosphorylation and nuclear translocation, thereby preventing the establishment of cellular antiviral state by blocking the IFN-alpha/beta pathway. Inhibits STAT2 translocation in the nucleus after IFN-alpha treatment. In terms of biological role, replicates the viral (+) and (-) RNA genome, and performs the capping of genomes in the cytoplasm. NS5 methylates viral RNA cap at guanine N-7 and ribose 2'-O positions. Besides its role in RNA genome replication, also prevents the establishment of cellular antiviral state by blocking the interferon-alpha/beta (IFN-alpha/beta) signaling pathway. Inhibits host TYK2 and STAT2 phosphorylation, thereby preventing activation of JAK-STAT signaling pathway. This is Genome polyprotein from Homo sapiens (Human).